The chain runs to 1486 residues: Chromosome partition protein MukB (1486 aa).

34–41 contacts ATP; that stretch reads GGNGAGKS. Coiled-coil stretches lie at residues 326–418, 444–480, and 509–603; these read LEAD…QYNQ, LETF…QAYQ, and RHLA…RAPV. Residues 666–783 form a flexible hinge region; it reads PGGSEDQRLN…EVPLFGRAAR (118 aa). Coiled-coil stretches lie at residues 835–923, 977–1115, and 1209–1266; these read EAEI…AKLE, EMLS…TAKA, and VEAI…QNVS.

This sequence belongs to the SMC family. MukB subfamily. In terms of assembly, homodimerization via its hinge domain. Binds to DNA via its C-terminal region. Interacts, and probably forms a ternary complex, with MukE and MukF via its C-terminal region. The complex formation is stimulated by calcium or magnesium. Interacts with tubulin-related protein FtsZ.

Its subcellular location is the cytoplasm. It localises to the nucleoid. Functionally, plays a central role in chromosome condensation, segregation and cell cycle progression. Functions as a homodimer, which is essential for chromosome partition. Involved in negative DNA supercoiling in vivo, and by this means organize and compact chromosomes. May achieve or facilitate chromosome segregation by condensation DNA from both sides of a centrally located replisome during cell division. The polypeptide is Chromosome partition protein MukB (Escherichia fergusonii (strain ATCC 35469 / DSM 13698 / CCUG 18766 / IAM 14443 / JCM 21226 / LMG 7866 / NBRC 102419 / NCTC 12128 / CDC 0568-73)).